Reading from the N-terminus, the 169-residue chain is uncharacterized protein (169 aa).

In terms of domain architecture, Nudix hydrolase spans 28–157 (ELHLVIHVCI…EFIPYFFLNQ (130 aa)). The Nudix box motif lies at 65–87 (AGSALKGETSQQAAEREVQEELG). Residues E81 and E85 each coordinate Mg(2+).

This sequence belongs to the Nudix hydrolase family. Mg(2+) serves as cofactor.

This is an uncharacterized protein from Listeria monocytogenes serovar 1/2a (strain ATCC BAA-679 / EGD-e).